The sequence spans 219 residues: uncharacterized protein (219 aa).

Residues 1-17 show a composition bias toward low complexity; sequence MIINNQNSPQSINTPSS. The interval 1 to 31 is disordered; the sequence is MIINNQNSPQSINTPSSVSSRQHINKSKKKK. The next 2 helical transmembrane spans lie at 49 to 69 and 83 to 105; these read SLATVFGVIGGLVLGIVLVCK and LVYRIVGIFLSAGTGGNLSSYIG. The segment at 135 to 219 is disordered; that stretch reads NHRSPIPLTN…NSDLEIPIPI (85 aa). The segment covering 144–212 has biased composition (low complexity); that stretch reads NLNNNNNNNN…SNNNNDNNSD (69 aa).

Its subcellular location is the membrane. This is an uncharacterized protein from Dictyostelium discoideum (Social amoeba).